The sequence spans 491 residues: Cysteine--tRNA ligase (491 aa).

Position 31 (C31) interacts with Zn(2+). Positions P33–H43 match the 'HIGH' region motif. 3 residues coordinate Zn(2+): C226, H251, and E255. The short motif at K283 to S287 is the 'KMSKS' region element. K286 contacts ATP.

The protein belongs to the class-I aminoacyl-tRNA synthetase family. Monomer. The cofactor is Zn(2+).

The protein localises to the cytoplasm. It catalyses the reaction tRNA(Cys) + L-cysteine + ATP = L-cysteinyl-tRNA(Cys) + AMP + diphosphate. This chain is Cysteine--tRNA ligase, found in Bacteroides fragilis (strain ATCC 25285 / DSM 2151 / CCUG 4856 / JCM 11019 / LMG 10263 / NCTC 9343 / Onslow / VPI 2553 / EN-2).